Consider the following 233-residue polypeptide: Small ribosomal subunit protein uS2 (233 aa).

Belongs to the universal ribosomal protein uS2 family.

The polypeptide is Small ribosomal subunit protein uS2 (Clostridium botulinum (strain Hall / ATCC 3502 / NCTC 13319 / Type A)).